The primary structure comprises 429 residues: MKNNYNLRSIAAIAIGQVLDQGQSLSTVLPSLQKTISDKDRALLQELCFGTLRVLPQLEWCIQQLMAKPMTGKQRTLHYLLMVGLYQLLYTRIPAHAVLAETVEGAVALKRPQLKGLINGVLRQFQRQQEELLQRAANNDSRYLHPSWLLKRIQQAYPAQWEQIIDANNQKPPMWLRVNRLHHTREDYLQLMEQAGIAAEPHAEYRDAVRLLAPCAVTDLPGFADGWVTVQDASAQGCVDLLDPQDGEQILDLCAAPGGKTTHILEAAPKAHVMAVDIDEQRLKRVKENLQRLRLHAEVKQGDGRTPQQWCGDKQFDRILLDAPCSATGVIRRHPDIKWLRRDSDIAELAALQAEIIEAIWPHLKSGGVMVYATCSILPAENAEQVSAFLQRHADARLVETGNQQQPGRQNLPHPEDGDGFFYAKLIKM.

Residues 254–260, aspartate 277, aspartate 303, and aspartate 322 each bind S-adenosyl-L-methionine; that span reads CAAPGGK. Residue cysteine 375 is the Nucleophile of the active site.

Belongs to the class I-like SAM-binding methyltransferase superfamily. RsmB/NOP family.

It localises to the cytoplasm. The catalysed reaction is cytidine(967) in 16S rRNA + S-adenosyl-L-methionine = 5-methylcytidine(967) in 16S rRNA + S-adenosyl-L-homocysteine + H(+). Specifically methylates the cytosine at position 967 (m5C967) of 16S rRNA. In Serratia proteamaculans (strain 568), this protein is Ribosomal RNA small subunit methyltransferase B.